The sequence spans 64 residues: Large ribosomal subunit protein uL30 (64 aa).

This sequence belongs to the universal ribosomal protein uL30 family. In terms of assembly, part of the 50S ribosomal subunit.

In Desulforudis audaxviator (strain MP104C), this protein is Large ribosomal subunit protein uL30.